Reading from the N-terminus, the 204-residue chain is Hydrophilin YNL190W (204 aa).

A signal peptide spans 1–20 (MKFSSVTAITLATVATVATA). Residues 35 to 46 (SDGSLTTTTSTH) are compositionally biased toward low complexity. Residues 35-179 (SDGSLTTTTS…ARKNNAAPGP (145 aa)) are disordered. A compositionally biased stretch (basic residues) spans 47–59 (TTHKYGKFNKTSK). Residues Asn55, Asn64, Asn75, Asn84, Asn95, Asn104, Asn115, Asn124, Asn135, Asn144, and Asn155 are each glycosylated (N-linked (GlcNAc...) asparagine). Over residues 67–79 (GTHKYGKFNKTSK) the composition is skewed to basic residues. Residues 87–99 (GTHKYGKFNKTSK) are compositionally biased toward basic residues. Positions 107-119 (GTHKYGKFNKTSK) are enriched in basic residues. Positions 127-139 (GTHKYGKFNKTSK) are enriched in basic residues. Positions 147-156 (GTHKYGKFNK) are enriched in basic residues. The GPI-anchor amidated asparagine moiety is linked to residue Asn174. Residues 175-204 (AAPGPSNFNSIKLFGVTAGSAAVAGALLLL) constitute a propeptide, removed in mature form.

The protein belongs to the PGA14 family. Post-translationally, the GPI-anchor is attached to the protein in the endoplasmic reticulum and serves to target the protein to the cell surface. There, the glucosamine-inositol phospholipid moiety is cleaved off and the GPI-modified mannoprotein is covalently attached via its lipidless GPI glycan remnant to the 1,6-beta-glucan of the outer cell wall layer.

It is found in the secreted. Its subcellular location is the cell wall. It localises to the membrane. In terms of biological role, hydrophilin which is essential to overcome the simple stress of the desiccation-rehydration process. The polypeptide is Hydrophilin YNL190W (Saccharomyces cerevisiae (strain ATCC 204508 / S288c) (Baker's yeast)).